The chain runs to 127 residues: Thioredoxin-3, mitochondrial (127 aa).

The transit peptide at 1–21 (MLFYKPVMRMAVRPLKSIRFQ) directs the protein to the mitochondrion. One can recognise a Thioredoxin domain in the interval 22–127 (SSYTSITKLT…TALEKGIKDL (106 aa)). Catalysis depends on nucleophile residues C55 and C58. C55 and C58 are disulfide-bonded.

The protein belongs to the thioredoxin family.

It localises to the mitochondrion. This chain is Thioredoxin-3, mitochondrial (TRX3), found in Saccharomyces cerevisiae (strain ATCC 204508 / S288c) (Baker's yeast).